Consider the following 204-residue polypeptide: MAEQEPTAEQLAQIAAENEEDEHSVNYKPPAQKSIQEIQELDKDDESLRKYKEALLGRVAVSADPNVPNVIVTRLTLVCSTAPGPLELDLTGDLESFKKQSFVLKEGVEYRIKISFRVNREIVSGMKYIQHTYRKGVKIDKTDYMVGSYGPRAEEYEFLTPMEEAPKGMLARGSYNIKSRFTDDDKTDHLSWEWNLTIKKEWKD.

Residues 1 to 36 (MAEQEPTAEQLAQIAAENEEDEHSVNYKPPAQKSIQ) are disordered. Ala-2 carries the N-acetylalanine modification. At Ser-34 the chain carries Phosphoserine. The residue at position 43 (Lys-43) is an N6-acetyllysine. Ser-47 bears the Phosphoserine mark. An N6-acetyllysine mark is found at Lys-105 and Lys-127. Glycyl lysine isopeptide (Lys-Gly) (interchain with G-Cter in SUMO1); alternate cross-links involve residues Lys-138 and Lys-141. Residues Lys-138 and Lys-141 each participate in a glycyl lysine isopeptide (Lys-Gly) (interchain with G-Cter in SUMO2); alternate cross-link. At Lys-141 the chain carries N6-acetyllysine; alternate. Lys-141 bears the N6-succinyllysine; alternate mark. Lys-178 is subject to N6-acetyllysine.

It belongs to the Rho GDI family. As to quaternary structure, monomer. Interacts with FER. Interacts with PLXNB3. Forms a heterodimer with RAC1. Interacts with RHOA, the affinity is increased by three orders of magnitude when RHOA is prenylated. Interacts with PSMD10; the interaction increases ARHGDIA association with RHOA, leading to ARHGDIA-mediated inactivation of RHOA and ROCK and prolonged AKT activation. Interacts with KANK2; the interaction is direct and may regulate the interaction of ARHGDIA with RHOA, RAC1 and CDC42. Interacts with RHOC. Interacts with CDC42. Interacts with NGFR (via death domain); NGFR binding decreases the affinity for RHOA. As to expression, in kidney glomerulus, expressed in podocytes and mesangial cells.

The protein resides in the cytoplasm. Controls Rho proteins homeostasis. Regulates the GDP/GTP exchange reaction of the Rho proteins by inhibiting the dissociation of GDP from them, and the subsequent binding of GTP to them. Retains Rho proteins such as CDC42, RAC1 and RHOA in an inactive cytosolic pool, regulating their stability and protecting them from degradation. Actively involved in the recycling and distribution of activated Rho GTPases in the cell, mediates extraction from membranes of both inactive and activated molecules due its exceptionally high affinity for prenylated forms. Through the modulation of Rho proteins, may play a role in cell motility regulation. In glioma cells, inhibits cell migration and invasion by mediating the signals of SEMA5A and PLXNB3 that lead to inactivation of RAC1. In Mus musculus (Mouse), this protein is Rho GDP-dissociation inhibitor 1 (Arhgdia).